The chain runs to 176 residues: Cytochrome b (176 aa).

3 helical membrane-spanning segments follow: residues 33–53 (FGSLLGVCLMMQILTGLFLAM), 77–98 (WLLRYLHANGASMFFICLYLHI), and 113–133 (WNVGIILLFAVMATAFMGYVL). Heme b contacts are provided by histidine 83 and histidine 97.

It belongs to the cytochrome b family. In terms of assembly, the cytochrome bc1 complex contains 11 subunits: 3 respiratory subunits (MT-CYB, CYC1 and UQCRFS1), 2 core proteins (UQCRC1 and UQCRC2) and 6 low-molecular weight proteins (UQCRH/QCR6, UQCRB/QCR7, UQCRQ/QCR8, UQCR10/QCR9, UQCR11/QCR10 and a cleavage product of UQCRFS1). This cytochrome bc1 complex then forms a dimer. Requires heme b as cofactor.

It is found in the mitochondrion inner membrane. In terms of biological role, component of the ubiquinol-cytochrome c reductase complex (complex III or cytochrome b-c1 complex) that is part of the mitochondrial respiratory chain. The b-c1 complex mediates electron transfer from ubiquinol to cytochrome c. Contributes to the generation of a proton gradient across the mitochondrial membrane that is then used for ATP synthesis. The protein is Cytochrome b (MT-CYB) of Promops centralis (Big crested mastiff bat).